Reading from the N-terminus, the 516-residue chain is Thioredoxin reductase 2, mitochondrial (516 aa).

Position 62–79 (62–79) interacts with FAD; it reads DYVKPTPVGTKWGIGGTC. Cys-79 and Cys-84 form a disulfide bridge. The active-site Proton acceptor is His-489.

It belongs to the class-I pyridine nucleotide-disulfide oxidoreductase family. As to quaternary structure, homodimer. FAD is required as a cofactor.

Its subcellular location is the mitochondrion. The catalysed reaction is [thioredoxin]-dithiol + NADP(+) = [thioredoxin]-disulfide + NADPH + H(+). Thioredoxin system is a major player in glutathione metabolism, due to the demonstrated absence of a glutathione reductase. Functionally interacts with the Sod/Cat reactive oxidation species (ROS) defense system and thereby has a role in preadult development and life span. Lack of a glutathione reductase suggests antioxidant defense in Drosophila, and probably in related insects, differs fundamentally from that in other organisms. The chain is Thioredoxin reductase 2, mitochondrial from Drosophila melanogaster (Fruit fly).